Here is a 342-residue protein sequence, read N- to C-terminus: Glycerol-3-phosphate dehydrogenase [NAD(P)+] (342 aa).

3 residues coordinate NADPH: Trp-11, Arg-31, and Lys-102. The sn-glycerol 3-phosphate site is built by Lys-102 and Gly-132. Ala-136 serves as a coordination point for NADPH. Lys-187, Asp-240, Ser-250, Arg-251, and Asn-252 together coordinate sn-glycerol 3-phosphate. Lys-187 serves as the catalytic Proton acceptor. Arg-251 contacts NADPH. Glu-277 provides a ligand contact to NADPH.

The protein belongs to the NAD-dependent glycerol-3-phosphate dehydrogenase family.

The protein resides in the cytoplasm. The catalysed reaction is sn-glycerol 3-phosphate + NAD(+) = dihydroxyacetone phosphate + NADH + H(+). The enzyme catalyses sn-glycerol 3-phosphate + NADP(+) = dihydroxyacetone phosphate + NADPH + H(+). The protein operates within membrane lipid metabolism; glycerophospholipid metabolism. Its function is as follows. Catalyzes the reduction of the glycolytic intermediate dihydroxyacetone phosphate (DHAP) to sn-glycerol 3-phosphate (G3P), the key precursor for phospholipid synthesis. This Symbiobacterium thermophilum (strain DSM 24528 / JCM 14929 / IAM 14863 / T) protein is Glycerol-3-phosphate dehydrogenase [NAD(P)+].